A 111-amino-acid chain; its full sequence is Pyrimidine/purine nucleoside phosphorylase 1 (111 aa).

This sequence belongs to the nucleoside phosphorylase PpnP family.

It carries out the reaction a purine D-ribonucleoside + phosphate = a purine nucleobase + alpha-D-ribose 1-phosphate. The enzyme catalyses adenosine + phosphate = alpha-D-ribose 1-phosphate + adenine. It catalyses the reaction cytidine + phosphate = cytosine + alpha-D-ribose 1-phosphate. The catalysed reaction is guanosine + phosphate = alpha-D-ribose 1-phosphate + guanine. It carries out the reaction inosine + phosphate = alpha-D-ribose 1-phosphate + hypoxanthine. The enzyme catalyses thymidine + phosphate = 2-deoxy-alpha-D-ribose 1-phosphate + thymine. It catalyses the reaction uridine + phosphate = alpha-D-ribose 1-phosphate + uracil. The catalysed reaction is xanthosine + phosphate = alpha-D-ribose 1-phosphate + xanthine. Functionally, catalyzes the phosphorolysis of diverse nucleosides, yielding D-ribose 1-phosphate and the respective free bases. Can use uridine, adenosine, guanosine, cytidine, thymidine, inosine and xanthosine as substrates. Also catalyzes the reverse reactions. The protein is Pyrimidine/purine nucleoside phosphorylase 1 of Psychrobacter cryohalolentis (strain ATCC BAA-1226 / DSM 17306 / VKM B-2378 / K5).